Reading from the N-terminus, the 374-residue chain is Chorismate synthase (374 aa).

Arginine 55 is an NADP(+) binding site. Residues 132-134 (RGS), glycine 293, 308-312 (KPTPS), and arginine 335 each bind FMN.

It belongs to the chorismate synthase family. Requires FMNH2 as cofactor.

It catalyses the reaction 5-O-(1-carboxyvinyl)-3-phosphoshikimate = chorismate + phosphate. It participates in metabolic intermediate biosynthesis; chorismate biosynthesis; chorismate from D-erythrose 4-phosphate and phosphoenolpyruvate: step 7/7. Functionally, catalyzes the anti-1,4-elimination of the C-3 phosphate and the C-6 proR hydrogen from 5-enolpyruvylshikimate-3-phosphate (EPSP) to yield chorismate, which is the branch point compound that serves as the starting substrate for the three terminal pathways of aromatic amino acid biosynthesis. This reaction introduces a second double bond into the aromatic ring system. This is Chorismate synthase from Methanothermobacter thermautotrophicus (strain ATCC 29096 / DSM 1053 / JCM 10044 / NBRC 100330 / Delta H) (Methanobacterium thermoautotrophicum).